We begin with the raw amino-acid sequence, 509 residues long: Dihydrolipoyl dehydrogenase, mitochondrial (509 aa).

Residues 1–35 (MQSWSRVYCSLAKRGHFNRISHGLQGVSSVPLRTY) constitute a mitochondrion transit peptide. N6-acetyllysine; alternate is present on K66. K66 bears the N6-succinyllysine; alternate mark. Residues 71–80 (EKNDTLGGTC) and K89 each bind FAD. A disulfide bridge links C80 with C85. N6-acetyllysine; alternate occurs at positions 122, 132, and 143. N6-succinyllysine; alternate is present on residues K122, K132, and K143. Residue G154 participates in FAD binding. K159 and K166 each carry N6-succinyllysine. 183–185 (TGS) serves as a coordination point for FAD. NAD(+)-binding positions include 220 to 227 (GAGVIGVE) and E243. N6-succinyllysine is present on residues K273 and K277. V278 contributes to the NAD(+) binding site. Residues S285 and S297 each carry the phosphoserine modification. Residue G314 coordinates NAD(+). K346 bears the N6-acetyllysine mark. FAD is bound by residues D355 and 361–364 (MLAH). K410 bears the N6-acetyllysine; alternate mark. Residue K410 is modified to N6-succinyllysine; alternate. N6-acetyllysine is present on residues K417 and K420. K430 is modified (N6-succinyllysine). H487 acts as the Proton acceptor in catalysis. S502 is modified (phosphoserine). At K505 the chain carries N6-acetyllysine; alternate. K505 carries the N6-succinyllysine; alternate modification.

This sequence belongs to the class-I pyridine nucleotide-disulfide oxidoreductase family. Homodimer. Part of the multimeric pyruvate dehydrogenase complex that contains multiple copies of pyruvate dehydrogenase (subunits PDHA (PDHA1 or PDHA2) and PDHB, E1), dihydrolipoamide acetyltransferase (DLAT, E2) and lipoamide dehydrogenase (DLD, E3). These subunits are bound to an inner core composed of about 48 DLAT and 12 PDHX molecules (by non covalent bonds). The 2-oxoglutarate dehydrogenase complex is composed of OGDH (2-oxoglutarate dehydrogenase; E1), DLST (dihydrolipoamide succinyltransferase; E2), DLD (dihydrolipoamide dehydrogenase; E3) and the assembly factor KGD4. It contains multiple copies of the three enzymatic components (E1, E2 and E3). In the nucleus, the 2-oxoglutarate dehydrogenase complex associates with KAT2A. Interacts with PDHX. Requires FAD as cofactor. In terms of processing, tyrosine phosphorylated.

It localises to the mitochondrion matrix. The protein resides in the nucleus. The protein localises to the cell projection. It is found in the cilium. Its subcellular location is the flagellum. It localises to the cytoplasmic vesicle. The protein resides in the secretory vesicle. The protein localises to the acrosome. The catalysed reaction is N(6)-[(R)-dihydrolipoyl]-L-lysyl-[protein] + NAD(+) = N(6)-[(R)-lipoyl]-L-lysyl-[protein] + NADH + H(+). Lipoamide dehydrogenase is a component of the glycine cleavage system as well as an E3 component of three alpha-ketoacid dehydrogenase complexes (pyruvate-, alpha-ketoglutarate-, and branched-chain amino acid-dehydrogenase complex). The 2-oxoglutarate dehydrogenase complex is mainly active in the mitochondrion. A fraction of the 2-oxoglutarate dehydrogenase complex also localizes in the nucleus and is required for lysine succinylation of histones: associates with KAT2A on chromatin and provides succinyl-CoA to histone succinyltransferase KAT2A. In monomeric form may have additional moonlighting function as serine protease. Involved in the hyperactivation of spermatazoa during capacitation and in the spermatazoal acrosome reaction. The protein is Dihydrolipoyl dehydrogenase, mitochondrial (DLD) of Cricetulus griseus (Chinese hamster).